Here is a 374-residue protein sequence, read N- to C-terminus: uncharacterized protein (374 aa).

The disordered stretch occupies residues 197 to 223 (GTTTTTNNNNNNNNNNNNNNNNGTNIT). A compositionally biased stretch (low complexity) spans 198 to 223 (TTTTTNNNNNNNNNNNNNNNNGTNIT). The stretch at 302 to 342 (DEVSDCNDINTNLKKKRKQQEQLQIEKEKKLLTIQQEQTKI) forms a coiled coil.

This is an uncharacterized protein from Dictyostelium discoideum (Social amoeba).